The sequence spans 152 residues: Ribosome maturation factor RimP (152 aa).

Belongs to the RimP family.

It is found in the cytoplasm. Required for maturation of 30S ribosomal subunits. The chain is Ribosome maturation factor RimP from Stutzerimonas stutzeri (strain A1501) (Pseudomonas stutzeri).